Consider the following 269-residue polypeptide: MSNNKIKRKDASPEQEAIESFTSLTKCDPKVSRKYLQRNHWNINYALNDYYDKEIGTFTDEVSTVAHPPVYPKELTQVFEHYINNNLFDIDSLVKFIEELGYNLEDLATLCLAHLLGYKKLEEPLKREDFLSTWFMQGCSTISDMQECIKTLDVKLHEDLQYFTQIYNYAFNLILDPNRKDIDTDEGIQYWKLFFQPEYPVRMEPDLLEAWFRFLRDEGKTTISKDTWRMLLLFFKRYPTIQKIISDYDETAAWPFIIDEFYECLQDQQ.

Serine 12 is modified (phosphoserine). In terms of domain architecture, UBA-like spans 14 to 51; that stretch reads EQEAIESFTSLTKCDPKVSRKYLQRNHWNINYALNDYY. The DCUN1 domain occupies 70–266; that stretch reads VYPKELTQVF…IIDEFYECLQ (197 aa).

As to quaternary structure, interacts with the cullin CDC53. Interacts with ubiquitin via its UBA-like domain. Interacts with RUB1/NEDD8.

Its function is as follows. Required for neddylation of cullin components of SCF-type E3 ubiquitin ligase complexes. Neddylation of cullins play an essential role in the regulation of SCF-type complexes activity. Does not act by preventing deneddylation, but rather facilitates neddylation, possibly by acting with HRT1/RBX1 to recruit the Nedd8-charged E2 UBC12 to the cullin component of SCF-type complexes. This Saccharomyces cerevisiae (strain ATCC 204508 / S288c) (Baker's yeast) protein is Defective in cullin neddylation protein 1 (DCN1).